Reading from the N-terminus, the 176-residue chain is Parathyroid hormone-related protein (176 aa).

Residues 1 to 25 form the signal peptide; it reads MMFTKLFQQWSFAVFLLSYSVPSYG. The propeptide occupies 26–37; it reads RSVEGISRRLKR. Residues 58–69 are important for receptor binding; it reads RIFLQNLIEGVN. A disordered region spans residues 76–157; sequence TSEVSPNPKP…WLNSGMYGSN (82 aa). 2 stretches are compositionally biased toward polar residues: residues 77–91 and 106–116; these read SEVS…NTKN and TQETNKSQTYK. The short motif at 109–130 is the Nuclear localization signal element; sequence TNKSQTYKEQPLKVSGKKKKAK. Basic residues predominate over residues 123–133; sequence SGKKKKAKPGK.

This sequence belongs to the parathyroid hormone family.

It localises to the secreted. The protein localises to the cytoplasm. It is found in the nucleus. In terms of biological role, neuroendocrine peptide which is a critical regulator of cellular and organ growth, development, migration, differentiation and survival and of epithelial calcium ion transport. Acts by binding to its receptor, PTH1R, activating G protein-coupled receptor signaling. Regulates endochondral bone development and epithelial-mesenchymal interactions during the formation of the mammary glands and teeth. Required for skeletal homeostasis. Its function is as follows. Potent inhibitor of osteoclastic bone resorption. The protein is Parathyroid hormone-related protein (PTHLH) of Gallus gallus (Chicken).